The following is a 321-amino-acid chain: Agamous-like MADS-box protein AGL80 (321 aa).

The 61-residue stretch at 1-61 folds into the MADS-box domain; the sequence is MTRKKVKLAY…DTNPEVWPSN (61 aa). The stretch at 89–114 forms a coiled coil; it reads FLKQRIAKATETLRRQRKDSRELEMT.

Interacts with AGL61 and AGL62. Forms a heterodimer with AGL61. Interacts with MEE14/CBP1. As to expression, expressed in the central cell of the female gametophyte and in early endosperm. Also detected in ovaries, young siliques, roots, leaves, stems, young flowers and anthers.

The protein localises to the nucleus. Probable transcription factor. Controls central cell differentiation during female gametophyte development. Required for the expression of DEMETER and DD46, but not for the expression of FIS2. Probable transcription factor that may function in the maintenance of the proper function of the central cell in pollen tube attraction. The sequence is that of Agamous-like MADS-box protein AGL80 (AGL80) from Arabidopsis thaliana (Mouse-ear cress).